The following is a 317-amino-acid chain: L-lactate dehydrogenase 2 (317 aa).

Residues valine 16, aspartate 37, lysine 42, tyrosine 68, and 82-83 (GA) contribute to the NAD(+) site. The substrate site is built by glutamine 85 and arginine 91. NAD(+) is bound by residues threonine 104, 121–123 (ASN), and threonine 146. Position 123-126 (123-126 (NPVD)) interacts with substrate. 151-154 (DTTR) contacts substrate. Residues arginine 156 and histidine 171 each coordinate beta-D-fructose 1,6-bisphosphate. The active-site Proton acceptor is histidine 178. Tyrosine 223 bears the Phosphotyrosine mark. Residue threonine 232 participates in substrate binding.

Belongs to the LDH/MDH superfamily. LDH family. As to quaternary structure, homotetramer.

It is found in the cytoplasm. It carries out the reaction (S)-lactate + NAD(+) = pyruvate + NADH + H(+). The protein operates within fermentation; pyruvate fermentation to lactate; (S)-lactate from pyruvate: step 1/1. With respect to regulation, allosterically activated by fructose 1,6-bisphosphate (FBP). Its function is as follows. Catalyzes the conversion of lactate to pyruvate. In Enterococcus faecalis (strain ATCC 700802 / V583), this protein is L-lactate dehydrogenase 2.